Here is a 214-residue protein sequence, read N- to C-terminus: Neuromodulin (214 aa).

The tract at residues Met-1 to Ala-214 is disordered. 2 S-palmitoyl cysteine lipidation sites follow: Cys-3 and Cys-4. Basic and acidic residues-rich tracts occupy residues Lys-9–His-33, Met-52–Glu-88, and Leu-95–Pro-122. The IQ domain maps to Ala-32 to Ser-61. The segment covering Glu-124 to Glu-133 has biased composition (low complexity). Composition is skewed to basic and acidic residues over residues Gln-150–Val-160, Ala-168–Ala-193, and Glu-205–Ala-214.

This sequence belongs to the neuromodulin family. Binds calmodulin with a greater affinity in the absence of Ca(2+) than in its presence. In terms of processing, palmitoylated. Palmitoylation is essential for plasma membrane association.

The protein resides in the cell membrane. It is found in the cell projection. It localises to the growth cone membrane. Its subcellular location is the synapse. The protein localises to the filopodium membrane. Functionally, this protein is associated with nerve growth. It is a major component of the motile 'growth cones' that form the tips of elongating axons. Plays a role in axonal and dendritic filopodia induction. In Xenopus laevis (African clawed frog), this protein is Neuromodulin (gap43).